A 558-amino-acid polypeptide reads, in one-letter code: Putative transposase for insertion sequence IS1162 (558 aa).

Residues 11–93 enclose the HTH IS408-type domain; that stretch reads IKECLRLKFE…PDLITIHREL (83 aa). The segment at residues 23–44 is a DNA-binding region (H-T-H motif); that stretch reads LSHEKIARALQLSKGVVSKYVT. In terms of domain architecture, Integrase catalytic spans 139–336; the sequence is QQHRAGEKLF…HPYEVVTFKR (198 aa). Positions 486–558 are disordered; sequence QGLDQQPLPK…AAGQPQPELR (73 aa).

The protein belongs to the transposase IS21/IS408/IS1162 family.

Functionally, required for the transposition of the insertion element. The protein is Putative transposase for insertion sequence IS1162 of Pseudomonas fluorescens.